Reading from the N-terminus, the 185-residue chain is ATP-dependent protease subunit HslV (185 aa).

The active site involves Thr-2. The Na(+) site is built by Gly-157, Cys-160, and Thr-163.

This sequence belongs to the peptidase T1B family. HslV subfamily. As to quaternary structure, a double ring-shaped homohexamer of HslV is capped on each side by a ring-shaped HslU homohexamer. The assembly of the HslU/HslV complex is dependent on binding of ATP.

It localises to the cytoplasm. The catalysed reaction is ATP-dependent cleavage of peptide bonds with broad specificity.. Its activity is regulated as follows. Allosterically activated by HslU binding. Its function is as follows. Protease subunit of a proteasome-like degradation complex believed to be a general protein degrading machinery. The sequence is that of ATP-dependent protease subunit HslV from Vibrio cholerae serotype O1 (strain ATCC 39315 / El Tor Inaba N16961).